The following is a 218-amino-acid chain: Sulfite reductase, assimilatory-type (218 aa).

[4Fe-4S] cluster is bound by residues cysteine 91, cysteine 97, cysteine 131, and cysteine 135. Cysteine 135 is a siroheme binding site.

This enzyme catalyzes the 6-electron reduction of sulfite to sulfide. This is one of several activities required for the biosynthesis of L-cysteine from sulfate. The sequence is that of Sulfite reductase, assimilatory-type from Nitratidesulfovibrio vulgaris (strain ATCC 29579 / DSM 644 / CCUG 34227 / NCIMB 8303 / VKM B-1760 / Hildenborough) (Desulfovibrio vulgaris).